The following is a 463-amino-acid chain: Hexose-6-phosphate:phosphate antiporter (463 aa).

Residues 1–24 (MLAFLNQVRKPTLDLPLDVRRKMW) lie on the Cytoplasmic side of the membrane. A helical membrane pass occupies residues 25-45 (FKPFMQSYLVVFIGYLTMYLI). At 46–60 (RKNFNIAQNDMISTY) the chain is on the periplasmic side. A helical transmembrane segment spans residues 61 to 81 (GLSMTELGMIGLGFSITYGVG). The Cytoplasmic portion of the chain corresponds to 82–96 (KTLVSYYADGKNTKQ). Residues 97 to 117 (FLPFMLILSAICMLGFSASMG) form a helical membrane-spanning segment. Residues 118 to 122 (AGSTS) lie on the Periplasmic side of the membrane. The chain crosses the membrane as a helical span at residues 123–143 (LFLMIAFYALSGFFQSTGGSC). The Cytoplasmic portion of the chain corresponds to 144 to 159 (SYSTITKWTPRRKRGT). Residues 160–180 (FLGFWNISHNLGGAGAAGVAL) traverse the membrane as a helical segment. The Periplasmic segment spans residues 181–189 (FGANYLFDG). A helical membrane pass occupies residues 190–210 (HVIGMFIFPSIIALIVGFIGL). Residues 211-259 (RFGSDSPESYGLGKAEELFGEEISEEDKETEENEMTKWQIFVEYVLKNK) lie on the Cytoplasmic side of the membrane. A helical membrane pass occupies residues 260-280 (VIWLLCFSNIFLYVVRIGIDQ). At 281-297 (WSTVYAFQELKLSKEVA) the chain is on the periplasmic side. The chain crosses the membrane as a helical span at residues 298–318 (IQGFTLFEVGALVGTLLWGWL). The Cytoplasmic segment spans residues 319–326 (SDLANGRR). Residues 327 to 347 (ALVACVALALIIATLGVYQHA) traverse the membrane as a helical segment. The Periplasmic segment spans residues 348–357 (SNQYVYLASL). A helical membrane pass occupies residues 358–378 (FALGFLVFGPQLLIGVAAVGF). Topologically, residues 379–382 (VPKK) are cytoplasmic. A helical transmembrane segment spans residues 383–403 (AIGAADGIKGTFAYLIGDSFA). Over 404 to 425 (KLGLGMIADGTPVFGLTGWAGT) the chain is Periplasmic. The helical transmembrane segment at 426–446 (FAALDAAAIGCICLMAMVAVM) threads the bilayer. The Cytoplasmic segment spans residues 447 to 463 (EERKIRREKKIQQVNIA).

Belongs to the major facilitator superfamily. Organophosphate:Pi antiporter (OPA) (TC 2.A.1.4) family.

It localises to the cell inner membrane. Functionally, mediates the exchange of external hexose 6-phosphate and internal inorganic phosphate. The protein is Hexose-6-phosphate:phosphate antiporter (uhpT) of Salmonella typhimurium (strain LT2 / SGSC1412 / ATCC 700720).